A 72-amino-acid chain; its full sequence is Translation initiation factor IF-1 (72 aa).

Residues 1–72 (MAKEDVIEMQ…SKGRIVFRAR (72 aa)) form the S1-like domain.

Belongs to the IF-1 family. Component of the 30S ribosomal translation pre-initiation complex which assembles on the 30S ribosome in the order IF-2 and IF-3, IF-1 and N-formylmethionyl-tRNA(fMet); mRNA recruitment can occur at any time during PIC assembly.

The protein localises to the cytoplasm. One of the essential components for the initiation of protein synthesis. Stabilizes the binding of IF-2 and IF-3 on the 30S subunit to which N-formylmethionyl-tRNA(fMet) subsequently binds. Helps modulate mRNA selection, yielding the 30S pre-initiation complex (PIC). Upon addition of the 50S ribosomal subunit IF-1, IF-2 and IF-3 are released leaving the mature 70S translation initiation complex. The polypeptide is Translation initiation factor IF-1 (Photobacterium profundum (strain SS9)).